We begin with the raw amino-acid sequence, 446 residues long: Ribosomal protein uS12 methylthiotransferase RimO (446 aa).

Positions 9–121 (PKVGFVSLGC…VLDAIHAALP (113 aa)) constitute an MTTase N-terminal domain. C18, C54, C83, C152, C156, and C159 together coordinate [4Fe-4S] cluster. Residues 138–375 (LTPPHYAYLK…MAVQEAISRQ (238 aa)) form the Radical SAM core domain. The region spanning 378–445 (QRRVGQRQRV…AHDLYGMVVS (68 aa)) is the TRAM domain.

The protein belongs to the methylthiotransferase family. RimO subfamily. [4Fe-4S] cluster is required as a cofactor.

It is found in the cytoplasm. It catalyses the reaction L-aspartate(89)-[ribosomal protein uS12]-hydrogen + (sulfur carrier)-SH + AH2 + 2 S-adenosyl-L-methionine = 3-methylsulfanyl-L-aspartate(89)-[ribosomal protein uS12]-hydrogen + (sulfur carrier)-H + 5'-deoxyadenosine + L-methionine + A + S-adenosyl-L-homocysteine + 2 H(+). In terms of biological role, catalyzes the methylthiolation of an aspartic acid residue of ribosomal protein uS12. The chain is Ribosomal protein uS12 methylthiotransferase RimO from Acidithiobacillus ferrooxidans (strain ATCC 23270 / DSM 14882 / CIP 104768 / NCIMB 8455) (Ferrobacillus ferrooxidans (strain ATCC 23270)).